The following is an 835-amino-acid chain: Replication origin-binding protein (835 aa).

The Helicase ATP-binding domain maps to 54–215; that stretch reads PGMSQTRPVT…SGLRGDENIH (162 aa). Residue 67 to 74 participates in ATP binding; the sequence is APMGSGKT.

It belongs to the herpesviridae OriBP family. Homodimer. Interacts with the major DNA-binding protein. Interacts with the helicase/primase component 52 and the polymerase accessory protein.

It is found in the host nucleus. Functions as a docking protein to recruit essential components of the viral replication machinery to viral DNA origins. In the presence of the major DNA-binding protein, opens dsDNA leading to a conformational change in the origin that facilitates DNA unwinding and subsequent replication. The polypeptide is Replication origin-binding protein (Varicella-zoster virus (strain Oka vaccine) (HHV-3)).